Here is a 60-residue protein sequence, read N- to C-terminus: Potassium channel toxin alpha-KTx 3.16 (60 aa).

A signal peptide spans 1–23; it reads MKVFSAVLIILFVCSMIIGISEG. 3 disulfide bridges follow: cysteine 30/cysteine 50, cysteine 36/cysteine 55, and cysteine 40/cysteine 57.

This sequence belongs to the short scorpion toxin superfamily. Potassium channel inhibitor family. Alpha-KTx 03 subfamily. As to expression, expressed by the venom gland.

The protein localises to the secreted. Functionally, potassium channel inhibitor. The chain is Potassium channel toxin alpha-KTx 3.16 from Mesobuthus gibbosus (Mediterranean checkered scorpion).